An 87-amino-acid chain; its full sequence is Glutaredoxin (87 aa).

Residues 1 to 87 (MFVVIFGRPG…LMKEQFGIVA (87 aa)) enclose the Glutaredoxin domain. An intrachain disulfide couples cysteine 11 to cysteine 14.

This sequence belongs to the glutaredoxin family. Monomer.

The protein resides in the cytoplasm. Has a glutathione-disulfide oxidoreductase activity in the presence of NADPH and glutathione reductase. Reduces low molecular weight disulfides and proteins. This Haemophilus influenzae (strain ATCC 51907 / DSM 11121 / KW20 / Rd) protein is Glutaredoxin (grxA).